Reading from the N-terminus, the 160-residue chain is Small ribosomal subunit protein uS7 (160 aa).

The protein belongs to the universal ribosomal protein uS7 family. In terms of assembly, part of the 30S ribosomal subunit. Contacts proteins S9 and S11.

Functionally, one of the primary rRNA binding proteins, it binds directly to 16S rRNA where it nucleates assembly of the head domain of the 30S subunit. Is located at the subunit interface close to the decoding center, probably blocks exit of the E-site tRNA. In Rickettsia conorii (strain ATCC VR-613 / Malish 7), this protein is Small ribosomal subunit protein uS7.